The chain runs to 139 residues: uncharacterized protein (139 aa).

Residues 43–59 (FGVISTLIAIFIGAFWL) form a helical membrane-spanning segment.

The protein localises to the membrane. This is an uncharacterized protein from Haemophilus influenzae (strain ATCC 51907 / DSM 11121 / KW20 / Rd).